A 487-amino-acid chain; its full sequence is Probable cytochrome P450 313a5 (487 aa).

The residue at position 223 (tyrosine 223) is a Phosphotyrosine. A heme-binding site is contributed by cysteine 433.

This sequence belongs to the cytochrome P450 family. It depends on heme as a cofactor.

The protein resides in the endoplasmic reticulum membrane. It is found in the microsome membrane. May be involved in the metabolism of insect hormones and in the breakdown of synthetic insecticides. In Drosophila melanogaster (Fruit fly), this protein is Probable cytochrome P450 313a5 (Cyp313a5).